A 363-amino-acid chain; its full sequence is Carbamoyl phosphate synthase small chain (363 aa).

Residues 1 to 172 (MTKRILMLED…AFASPGDGKR (172 aa)) form a CPSase region. Residues serine 46, glycine 220, and glycine 222 each coordinate L-glutamine. The 188-residue stretch at 172–359 (RVVLVDYGVK…MEMMNGKEEG (188 aa)) folds into the Glutamine amidotransferase type-1 domain. Cysteine 247 serves as the catalytic Nucleophile. Leucine 248, glutamine 251, asparagine 289, glycine 291, and tyrosine 292 together coordinate L-glutamine. Residues histidine 332 and glutamate 334 contribute to the active site.

It belongs to the CarA family. As to quaternary structure, composed of two chains; the small (or glutamine) chain promotes the hydrolysis of glutamine to ammonia, which is used by the large (or ammonia) chain to synthesize carbamoyl phosphate. Tetramer of heterodimers (alpha,beta)4.

It catalyses the reaction hydrogencarbonate + L-glutamine + 2 ATP + H2O = carbamoyl phosphate + L-glutamate + 2 ADP + phosphate + 2 H(+). The enzyme catalyses L-glutamine + H2O = L-glutamate + NH4(+). It participates in amino-acid biosynthesis; L-arginine biosynthesis; carbamoyl phosphate from bicarbonate: step 1/1. Its pathway is pyrimidine metabolism; UMP biosynthesis via de novo pathway; (S)-dihydroorotate from bicarbonate: step 1/3. Small subunit of the glutamine-dependent carbamoyl phosphate synthetase (CPSase). CPSase catalyzes the formation of carbamoyl phosphate from the ammonia moiety of glutamine, carbonate, and phosphate donated by ATP, constituting the first step of 2 biosynthetic pathways, one leading to arginine and/or urea and the other to pyrimidine nucleotides. The small subunit (glutamine amidotransferase) binds and cleaves glutamine to supply the large subunit with the substrate ammonia. The chain is Carbamoyl phosphate synthase small chain from Listeria monocytogenes serotype 4b (strain F2365).